A 525-amino-acid polypeptide reads, in one-letter code: Keratin, type I cytoskeletal 24 (525 aa).

A disordered region spans residues 1 to 30; sequence MSCSSRASSSRAGGSSSARVSAGGSSFSSG. A head region spans residues 1 to 139; sequence MSCSSRASSS…VGDGGLFSGG (139 aa). The segment at 140-175 is coil 1A; the sequence is EKQTMQNLNDRLANYLDKVRALEEANTDLENKIKEW. Positions 140-456 constitute an IF rod domain; sequence EKQTMQNLND…RLLDGEGGGS (317 aa). Residues 176-198 form a linker 1 region; that stretch reads YDKYGPGSGDGGSGRDYSKYYSI. The coil 1B stretch occupies residues 199 to 290; that stretch reads IEDLRNQIIA…KNHEEEMKNM (92 aa). Positions 291-313 are linker 12; that stretch reads QGSSGGEVTVEMNAAPGTDLTKL. The interval 314-452 is coil 2; it reads LNDMRAQYEE…ETYRRLLDGE (139 aa). The interval 453–525 is tail; sequence GGGSSFAEFG…VSSISEVKVK (73 aa). The segment at 459–497 is disordered; sequence AEFGGRNSGSVNMGSRDLVSGDSRSGSCSGQGRDSSKTR. Residues 480-491 are compositionally biased toward polar residues; it reads DSRSGSCSGQGR.

It belongs to the intermediate filament family. As to quaternary structure, heterotetramer of two type I and two type II keratins. In terms of tissue distribution, highly expressed in keratinocytes, placenta, colon and spleen. Expressed at lower level in thymus and testis.

The protein is Keratin, type I cytoskeletal 24 (KRT24) of Homo sapiens (Human).